The chain runs to 226 residues: ATP synthase F(0) complex subunit a (226 aa).

A run of 6 helical transmembrane segments spans residues 5–25, 68–88, 97–117, 136–156, 179–199, and 201–221; these read LFAP…LIII, WSLM…LGML, QLSM…ATGF, FLIP…PVAL, LVLM…LALL, and ILEF…VSLY.

This sequence belongs to the ATPase A chain family. As to quaternary structure, component of the ATP synthase complex composed at least of ATP5F1A/subunit alpha, ATP5F1B/subunit beta, ATP5MC1/subunit c (homooctomer), MT-ATP6/subunit a, MT-ATP8/subunit 8, ATP5ME/subunit e, ATP5MF/subunit f, ATP5MG/subunit g, ATP5MK/subunit k, ATP5MJ/subunit j, ATP5F1C/subunit gamma, ATP5F1D/subunit delta, ATP5F1E/subunit epsilon, ATP5PF/subunit F6, ATP5PB/subunit b, ATP5PD/subunit d, ATP5PO/subunit OSCP. ATP synthase complex consists of a soluble F(1) head domain (subunits alpha(3) and beta(3)) - the catalytic core - and a membrane F(0) domain - the membrane proton channel (subunits c, a, 8, e, f, g, k and j). These two domains are linked by a central stalk (subunits gamma, delta, and epsilon) rotating inside the F1 region and a stationary peripheral stalk (subunits F6, b, d, and OSCP). Interacts with DNAJC30; interaction is direct.

It is found in the mitochondrion inner membrane. The catalysed reaction is H(+)(in) = H(+)(out). In terms of biological role, subunit a, of the mitochondrial membrane ATP synthase complex (F(1)F(0) ATP synthase or Complex V) that produces ATP from ADP in the presence of a proton gradient across the membrane which is generated by electron transport complexes of the respiratory chain. ATP synthase complex consist of a soluble F(1) head domain - the catalytic core - and a membrane F(1) domain - the membrane proton channel. These two domains are linked by a central stalk rotating inside the F(1) region and a stationary peripheral stalk. During catalysis, ATP synthesis in the catalytic domain of F(1) is coupled via a rotary mechanism of the central stalk subunits to proton translocation. With the subunit c (ATP5MC1), forms the proton-conducting channel in the F(0) domain, that contains two crucial half-channels (inlet and outlet) that facilitate proton movement from the mitochondrial intermembrane space (IMS) into the matrix. Protons are taken up via the inlet half-channel and released through the outlet half-channel, following a Grotthuss mechanism. The sequence is that of ATP synthase F(0) complex subunit a from Balaenoptera musculus (Blue whale).